Consider the following 315-residue polypeptide: Aspartate carbamoyltransferase catalytic subunit (315 aa).

Residues Arg-65 and Thr-66 each contribute to the carbamoyl phosphate site. Lys-93 provides a ligand contact to L-aspartate. Carbamoyl phosphate contacts are provided by Arg-115, His-145, and Gln-148. Residues Arg-179 and Arg-234 each contribute to the L-aspartate site. Residues Gly-275 and Pro-276 each coordinate carbamoyl phosphate.

It belongs to the aspartate/ornithine carbamoyltransferase superfamily. ATCase family. As to quaternary structure, heterododecamer (2C3:3R2) of six catalytic PyrB chains organized as two trimers (C3), and six regulatory PyrI chains organized as three dimers (R2).

The enzyme catalyses carbamoyl phosphate + L-aspartate = N-carbamoyl-L-aspartate + phosphate + H(+). It participates in pyrimidine metabolism; UMP biosynthesis via de novo pathway; (S)-dihydroorotate from bicarbonate: step 2/3. Catalyzes the condensation of carbamoyl phosphate and aspartate to form carbamoyl aspartate and inorganic phosphate, the committed step in the de novo pyrimidine nucleotide biosynthesis pathway. This chain is Aspartate carbamoyltransferase catalytic subunit, found in Xanthomonas axonopodis pv. citri (strain 306).